A 453-amino-acid chain; its full sequence is Glucose N-acetyltransferase 1-B (453 aa).

Over 1–8 the chain is Cytoplasmic; sequence MLKRKVRY. A helical; Signal-anchor for type II membrane protein membrane pass occupies residues 9–29; sequence LLLIVVVFTGIILSVEAIMRF. Residues 30 to 453 lie on the Lumenal side of the membrane; the sequence is QLNKNVDYYL…LESRAICQVN (424 aa). Residues Asn-108, Asn-126, and Asn-176 are each glycosylated (N-linked (GlcNAc...) asparagine). A DXD motif is present at residues 187–189; that stretch reads DND.

Belongs to the GNT1 family.

The protein localises to the golgi apparatus membrane. It is found in the vacuole membrane. N-acetylglucosaminyltransferase involved in the Golgi-specific modification of N-linked glycans. The chain is Glucose N-acetyltransferase 1-B (GNT1-B) from Kluyveromyces lactis (strain ATCC 8585 / CBS 2359 / DSM 70799 / NBRC 1267 / NRRL Y-1140 / WM37) (Yeast).